A 556-amino-acid polypeptide reads, in one-letter code: Arginine--tRNA ligase 1 (556 aa).

The 'HIGH' region signature appears at 132–142 (ANPTGDLHLGH).

The protein belongs to the class-I aminoacyl-tRNA synthetase family. As to quaternary structure, monomer.

The protein resides in the cytoplasm. The catalysed reaction is tRNA(Arg) + L-arginine + ATP = L-arginyl-tRNA(Arg) + AMP + diphosphate. This chain is Arginine--tRNA ligase 1, found in Bacillus anthracis.